Here is a 567-residue protein sequence, read N- to C-terminus: Hexose transporter HXT16 (567 aa).

Residues methionine 1–alanine 19 are compositionally biased toward polar residues. The disordered stretch occupies residues methionine 1–tryptophan 32. At methionine 1 to leucine 55 the chain is on the cytoplasmic side. A helical transmembrane segment spans residues glycine 56–tryptophan 76. Over aspartate 77–glycine 112 the chain is Extracellular. Residues leucine 113–alanine 133 traverse the membrane as a helical segment. The Cytoplasmic portion of the chain corresponds to aspartate 134 to arginine 139. A helical transmembrane segment spans residues leucine 140–asparagine 160. The Extracellular segment spans residues histidine 161–lysine 170. A helical membrane pass occupies residues isoleucine 171–isoleucine 191. Residues alanine 192–arginine 197 lie on the Cytoplasmic side of the membrane. Residues glycine 198–serine 218 traverse the membrane as a helical segment. The Extracellular segment spans residues valine 219 to arginine 232. A helical transmembrane segment spans residues isoleucine 233 to proline 253. Topologically, residues glutamate 254 to glutamate 336 are cytoplasmic. The chain crosses the membrane as a helical span at residues asparagine 337–threonine 353. At aspartate 354–serine 359 the chain is on the extracellular side. A helical transmembrane segment spans residues isoleucine 360–valine 377. Residues aspartate 378 to lysine 384 are Cytoplasmic-facing. A helical membrane pass occupies residues cysteine 385–valine 405. The Extracellular segment spans residues lysine 406–valine 427. A helical transmembrane segment spans residues phenylalanine 428–valine 448. Residues alanine 449–threonine 465 are Cytoplasmic-facing. The chain crosses the membrane as a helical span at residues alanine 466–isoleucine 486. A topological domain (extracellular) is located at residue histidine 487. A helical transmembrane segment spans residues phenylalanine 488–phenylalanine 508. The Cytoplasmic portion of the chain corresponds to leucine 509–asparagine 567. The tract at residues serine 533 to serine 555 is disordered. The segment covering serine 545–serine 555 has biased composition (basic and acidic residues).

This sequence belongs to the major facilitator superfamily. Sugar transporter (TC 2.A.1.1) family.

The protein resides in the membrane. In terms of biological role, probable glucose transporter. The chain is Hexose transporter HXT16 (HXT16) from Saccharomyces cerevisiae (strain ATCC 204508 / S288c) (Baker's yeast).